The primary structure comprises 318 residues: Olfactory receptor-like protein COR1 (318 aa).

Residues 1-26 are Extracellular-facing; sequence MASGNCTTPTTFILSGLTDNPGLQMP. Residue N5 is glycosylated (N-linked (GlcNAc...) asparagine). Residues 27–49 traverse the membrane as a helical segment; the sequence is LFMVFLAIYTITLLTNLGLIALI. Residues 50 to 57 are Cytoplasmic-facing; that stretch reads SVDLHLQT. Residues 58–79 traverse the membrane as a helical segment; it reads PMYIFLQNLSFTDAAYSTVITP. Topologically, residues 80–100 are extracellular; sequence KMLATFLEERKTISYVGCILQ. C97 and C179 are disulfide-bonded. Residues 101–120 traverse the membrane as a helical segment; the sequence is YFSFVLLTVTESLLLAVMAY. Topologically, residues 121-139 are cytoplasmic; the sequence is DRYVAICKPLLYPSIMTKA. The helical transmembrane segment at 140 to 164 threads the bilayer; that stretch reads VCWRLVESLYFLAFLNSLVHTSGLL. The Extracellular segment spans residues 165–205; that stretch reads KLSFCYSNVVNHFFCDISPLFQISSSSIAISELLVIISGSL. A helical membrane pass occupies residues 206 to 226; that stretch reads FVMSSIIIILISYVFIILTVV. Over 227–239 the chain is Cytoplasmic; that stretch reads MIRSKDGKYKAFS. Residues 240 to 260 form a helical membrane-spanning segment; that stretch reads TCTSHLMAVSLFHGTVIFMYL. Residues 261 to 271 are Extracellular-facing; it reads RPVKLFSLDTD. The helical transmembrane segment at 272–292 threads the bilayer; that stretch reads KIASLFYTVVIPMLNPLIYSW. Residues 293–318 are Cytoplasmic-facing; that stretch reads RNKEVKDALRRLTATTFGFIDSKAVQ.

This sequence belongs to the G-protein coupled receptor 1 family.

The protein resides in the cell membrane. Functionally, odorant receptor. This Gallus gallus (Chicken) protein is Olfactory receptor-like protein COR1 (COR1).